Consider the following 87-residue polypeptide: Large ribosomal subunit protein bL31B (87 aa).

Belongs to the bacterial ribosomal protein bL31 family. Type B subfamily. In terms of assembly, part of the 50S ribosomal subunit.

The protein is Large ribosomal subunit protein bL31B of Salinispora arenicola (strain CNS-205).